The chain runs to 344 residues: N-acetyl-gamma-glutamyl-phosphate reductase (344 aa).

The active site involves Cys-149.

Belongs to the NAGSA dehydrogenase family. Type 1 subfamily.

It is found in the cytoplasm. It catalyses the reaction N-acetyl-L-glutamate 5-semialdehyde + phosphate + NADP(+) = N-acetyl-L-glutamyl 5-phosphate + NADPH + H(+). The protein operates within amino-acid biosynthesis; L-arginine biosynthesis; N(2)-acetyl-L-ornithine from L-glutamate: step 3/4. In terms of biological role, catalyzes the NADPH-dependent reduction of N-acetyl-5-glutamyl phosphate to yield N-acetyl-L-glutamate 5-semialdehyde. The chain is N-acetyl-gamma-glutamyl-phosphate reductase from Halorhodospira halophila (strain DSM 244 / SL1) (Ectothiorhodospira halophila (strain DSM 244 / SL1)).